The sequence spans 69 residues: MFTLKKTLLLLFFLGTISISLCKQERDADEDDGRKMTEEEVKRSIITMTKEAKLPQLWKQIACRLYNTC.

The signal sequence occupies residues 1 to 18 (MFTLKKTLLLLFFLGTIS). The propeptide occupies 19 to 43 (ISLCKQERDADEDDGRKMTEEEVKR). An intrachain disulfide couples Cys-63 to Cys-69.

Expressed by the skin glands.

The protein localises to the secreted. In terms of biological role, antimicrobial peptide. Has activity against the Gram-positive bacterium S.aureus ATCC2592 (MIC=15 ug/ml), the Gram-negative bacteria E.coli ATCC25922 (MIC=60 ug/ml), B.dysenteriae (MIC=120 ug/ml), H.pylori NTCT11637 (MIC=30 ug/ml), and the fungus C.albicans ATCC2002 (MIC=30 ug/ml). Has little hemolytic activity on rabbit red blood cells. The sequence is that of Pleurain-A1 from Nidirana pleuraden (Yunnan pond frog).